Reading from the N-terminus, the 267-residue chain is MCPAFSIFFNSRRYSLTPPTYTPSPKPPTPKPTPPTYTPSPKPPASKPPTPKPTPPTYTPSPKPPTPKPTPPTYTPSPKPPATKPPTPKPTPPTYTPSPKPPTPKPTPPTYTPSPKPPATKPPTPKPTPPTYTPSPKPPTPKPTPPTYTPSPKPPTPKPTPPTYTPSPKPPTHPTPKPTPPTYTPSPKPPTPKPTPPTYTPSPKPPTPKPTPPTYTPSPKPPATKPPTPKPTPPTYTPTPKPPATKPPTYTPTPPVSHTPSPPPPYY.

The tract at residues 1–267 is disordered; that stretch reads MCPAFSIFFN…HTPSPPPPYY (267 aa). Repeats lie at residues 18–33, 34–54, 55–70, 71–91, 92–107, 108–128, 129–144, 145–160, 161–179, 180–195, 196–211, 212–232, and 233–253; these read PPTY…PKPT and PPTY…YTPT. Residues 18 to 253 form a highly repetitive region; sequence PPTYTPSPKP…ATKPPTYTPT (236 aa). Residues 20–267 are compositionally biased toward pro residues; the sequence is TYTPSPKPPT…HTPSPPPPYY (248 aa). Positions 261 to 265 are extensin repetitive element; that stretch reads SPPPP.

Hydroxylated on proline residues in the S-P-P-P-P repeat. In terms of processing, O-glycosylated on hydroxyprolines. As to expression, mainly in the coleoptile node and root tip.

Its subcellular location is the secreted. The protein resides in the primary cell wall. Functionally, structural component in primary cell wall. The sequence is that of Extensin (HRGP) from Zea mays (Maize).